A 63-amino-acid polypeptide reads, in one-letter code: Cytochrome c oxidase subunit 7C, mitochondrial (63 aa).

Residues 1–16 (MLGHSIRRFTTSVVRR) constitute a mitochondrion transit peptide. The Mitochondrial matrix portion of the chain corresponds to 17–33 (SHYEEGPGKNLPFSVEN). Lys25 is subject to N6-acetyllysine; alternate. At Lys25 the chain carries N6-succinyllysine; alternate. The helical transmembrane segment at 34–60 (KWTLLVKMCLFFGSAFSVPFLIVRHQL) threads the bilayer. Over 61–63 (LKQ) the chain is Mitochondrial intermembrane.

The protein belongs to the cytochrome c oxidase VIIc family. In terms of assembly, component of the cytochrome c oxidase (complex IV, CIV), a multisubunit enzyme composed of 14 subunits. The complex is composed of a catalytic core of 3 subunits MT-CO1, MT-CO2 and MT-CO3, encoded in the mitochondrial DNA, and 11 supernumerary subunits COX4I, COX5A, COX5B, COX6A, COX6B, COX6C, COX7A, COX7B, COX7C, COX8 and NDUFA4, which are encoded in the nuclear genome. The complex exists as a monomer or a dimer and forms supercomplexes (SCs) in the inner mitochondrial membrane with NADH-ubiquinone oxidoreductase (complex I, CI) and ubiquinol-cytochrome c oxidoreductase (cytochrome b-c1 complex, complex III, CIII), resulting in different assemblies (supercomplex SCI(1)III(2)IV(1) and megacomplex MCI(2)III(2)IV(2)). Interacts with RAB5IF.

It is found in the mitochondrion inner membrane. It functions in the pathway energy metabolism; oxidative phosphorylation. Component of the cytochrome c oxidase, the last enzyme in the mitochondrial electron transport chain which drives oxidative phosphorylation. The respiratory chain contains 3 multisubunit complexes succinate dehydrogenase (complex II, CII), ubiquinol-cytochrome c oxidoreductase (cytochrome b-c1 complex, complex III, CIII) and cytochrome c oxidase (complex IV, CIV), that cooperate to transfer electrons derived from NADH and succinate to molecular oxygen, creating an electrochemical gradient over the inner membrane that drives transmembrane transport and the ATP synthase. Cytochrome c oxidase is the component of the respiratory chain that catalyzes the reduction of oxygen to water. Electrons originating from reduced cytochrome c in the intermembrane space (IMS) are transferred via the dinuclear copper A center (CU(A)) of subunit 2 and heme A of subunit 1 to the active site in subunit 1, a binuclear center (BNC) formed by heme A3 and copper B (CU(B)). The BNC reduces molecular oxygen to 2 water molecules using 4 electrons from cytochrome c in the IMS and 4 protons from the mitochondrial matrix. This is Cytochrome c oxidase subunit 7C, mitochondrial (COX7C) from Macaca fascicularis (Crab-eating macaque).